The following is a 130-amino-acid chain: Small ribosomal subunit protein uS9 (130 aa).

Positions 98–130 (LKRAGLLTRDPRMKERKKPGLKKARRSPQFSKR) are disordered. Residues 111–130 (KERKKPGLKKARRSPQFSKR) are compositionally biased toward basic residues.

The protein belongs to the universal ribosomal protein uS9 family.

The sequence is that of Small ribosomal subunit protein uS9 (rpsI) from Staphylococcus carnosus (strain TM300).